Reading from the N-terminus, the 255-residue chain is tRNA (guanine-N(1)-)-methyltransferase (255 aa).

S-adenosyl-L-methionine-binding positions include Gly-117 and Leu-137–Leu-142.

This sequence belongs to the RNA methyltransferase TrmD family. In terms of assembly, homodimer.

Its subcellular location is the cytoplasm. It carries out the reaction guanosine(37) in tRNA + S-adenosyl-L-methionine = N(1)-methylguanosine(37) in tRNA + S-adenosyl-L-homocysteine + H(+). Its function is as follows. Specifically methylates guanosine-37 in various tRNAs. The protein is tRNA (guanine-N(1)-)-methyltransferase of Paracidovorax citrulli (strain AAC00-1) (Acidovorax citrulli).